A 500-amino-acid chain; its full sequence is MEIAVQCQNPTTDNSDCVVVGIYEGGILSPAATLVDLASGGALRALLDTGDFTGDCGDTQLLYQVPGMAAARVLVLGLGSHGKVKDSQFRKAALAAARALQGARVGRASLHLLDTPVIRRSAPACAKILVQAVADAEYHFDRHKKPADAPQRPISELQLSISENDTAALAELQGAVAEAQATARAVAWTRDMANEPGNICTPTWLAEQAEAMAGRLGIKSTILGPDAMEALGMHLLLGVAHGSRQPPRLIILEYRGGAENQAPIVLVGKGITFDAGGISLKPADKMDEMKYDMCGGASALAAIQAAAELQLPLNIVTVVPASENLPDGQATKPGDIHRSMNGLSVEVVNTDAEGRLILADTLTYVERFEPDVVIDMATLTGACIIALGHQTAAVMGNHEGLVHDLIAAGKESMDRVWELPLFEEYQEQLKSPVADLSNVGGRPAGTITAACFLSRFTENYRWAHLDIAGVAWKSGEHKGATGRPVPLLVEYLLRRARQVA.

The Mn(2+) site is built by Lys-269 and Asp-274. Residue Lys-281 is part of the active site. Residues Asp-292, Asp-351, and Glu-353 each contribute to the Mn(2+) site. Residue Arg-355 is part of the active site.

Belongs to the peptidase M17 family. Mn(2+) is required as a cofactor.

The protein resides in the cytoplasm. It catalyses the reaction Release of an N-terminal amino acid, Xaa-|-Yaa-, in which Xaa is preferably Leu, but may be other amino acids including Pro although not Arg or Lys, and Yaa may be Pro. Amino acid amides and methyl esters are also readily hydrolyzed, but rates on arylamides are exceedingly low.. It carries out the reaction Release of an N-terminal amino acid, preferentially leucine, but not glutamic or aspartic acids.. Presumably involved in the processing and regular turnover of intracellular proteins. Catalyzes the removal of unsubstituted N-terminal amino acids from various peptides. This chain is Probable cytosol aminopeptidase, found in Acidithiobacillus ferrooxidans (strain ATCC 23270 / DSM 14882 / CIP 104768 / NCIMB 8455) (Ferrobacillus ferrooxidans (strain ATCC 23270)).